The following is a 513-amino-acid chain: ATP synthase subunit alpha (513 aa).

An ATP-binding site is contributed by 169–176 (GDRQTGKT).

This sequence belongs to the ATPase alpha/beta chains family. In terms of assembly, F-type ATPases have 2 components, CF(1) - the catalytic core - and CF(0) - the membrane proton channel. CF(1) has five subunits: alpha(3), beta(3), gamma(1), delta(1), epsilon(1). CF(0) has three main subunits: a(1), b(2) and c(9-12). The alpha and beta chains form an alternating ring which encloses part of the gamma chain. CF(1) is attached to CF(0) by a central stalk formed by the gamma and epsilon chains, while a peripheral stalk is formed by the delta and b chains.

Its subcellular location is the cell inner membrane. The catalysed reaction is ATP + H2O + 4 H(+)(in) = ADP + phosphate + 5 H(+)(out). Its function is as follows. Produces ATP from ADP in the presence of a proton gradient across the membrane. The alpha chain is a regulatory subunit. The polypeptide is ATP synthase subunit alpha (Thiobacillus denitrificans (strain ATCC 25259 / T1)).